The chain runs to 901 residues: HTH-type transcriptional regulator MalT (901 aa).

39–46 provides a ligand contact to ATP; it reads SPAGYGKT. Residues 829–894 form the HTH luxR-type domain; the sequence is ELIRTSPLTQ…AAVQHAQKLL (66 aa). Positions 853 to 872 form a DNA-binding region, H-T-H motif; the sequence is NEQIAGELEVAATTIKTHIR.

The protein belongs to the MalT family. In terms of assembly, monomer in solution. Oligomerizes to an active state in the presence of the positive effectors ATP and maltotriose.

Activated by ATP and maltotriose, which are both required for DNA binding. In terms of biological role, positively regulates the transcription of the maltose regulon whose gene products are responsible for uptake and catabolism of malto-oligosaccharides. Specifically binds to the promoter region of its target genes, recognizing a short DNA motif called the MalT box. This is HTH-type transcriptional regulator MalT from Escherichia coli O6:K15:H31 (strain 536 / UPEC).